A 364-amino-acid polypeptide reads, in one-letter code: ATP synthase gamma chain, chloroplastic (364 aa).

The N-terminal 41 residues, 1–41 (MACSLSFSSSVSTFHLPTTTQSTQAPPNNATTLPTTNPIQC), are a transit peptide targeting the chloroplast. The tract at residues 17 to 36 (PTTTQSTQAPPNNATTLPTT) is disordered. The span at 25–36 (APPNNATTLPTT) shows a compositional bias: low complexity. C130 is a catalytic residue. An intrachain disulfide couples C240 to C246.

Belongs to the ATPase gamma chain family. In terms of assembly, F-type ATPases have 2 components, CF(1) - the catalytic core - and CF(0) - the membrane proton channel. CF(1) has five subunits: alpha(3), beta(3), gamma(1), delta(1), epsilon(1). CF(0) has four main subunits: a, b, b' and c. Post-translationally, disulfide bond; Cys-240 and Cys-246 are known to form a disulfide bridge in the dark which gives rise to an inactive enzyme. Activation can be brought about by a ferredoxin-dependent reduction of the disulfide bond in the light.

Its subcellular location is the plastid. It is found in the chloroplast thylakoid membrane. Its function is as follows. Produces ATP from ADP in the presence of a proton gradient across the membrane. The gamma chain is believed to be important in regulating ATPase activity and the flow of protons through the CF(0) complex. The chain is ATP synthase gamma chain, chloroplastic (ATPC) from Spinacia oleracea (Spinach).